The primary structure comprises 63 residues: DNA-directed RNA polymerase 7 kDa subunit (63 aa).

The protein belongs to the poxviridae DNA-directed RNA polymerase 7 kDa subunit family. As to quaternary structure, the DNA-dependent RNA polymerase used for intermediate and late genes expression consists of eight subunits 147 kDa, 133 kDa, 35 kDa, 30 kDa, 22 kDa, 19 kDa, 18 kDa and 7 kDa totalling more than 500 kDa in mass. The same holoenzyme, with the addition of the transcription-specificity factor RAP94, is used for early gene expression.

Its subcellular location is the virion. The catalysed reaction is RNA(n) + a ribonucleoside 5'-triphosphate = RNA(n+1) + diphosphate. Functionally, part of the DNA-dependent RNA polymerase which catalyzes the transcription of viral DNA into RNA using the four ribonucleoside triphosphates as substrates. Responsible for the transcription of early, intermediate and late genes. DNA-dependent RNA polymerase associates with the early transcription factor (ETF) thereby allowing the early genes transcription. Late transcription, and probably also intermediate transcription, require newly synthesized RNA polymerase. The sequence is that of DNA-directed RNA polymerase 7 kDa subunit (RPO7) from Myxoma virus (strain Lausanne) (MYXV).